A 107-amino-acid chain; its full sequence is Sperm-specific class P protein 31 (107 aa).

The MSP domain occupies 1-107; the sequence is MINIDPPSGD…GEVVVKMVAS (107 aa).

As to expression, expressed at higher level in testis.

This Caenorhabditis elegans protein is Sperm-specific class P protein 31 (ssp-31).